A 206-amino-acid polypeptide reads, in one-letter code: Uracil phosphoribosyltransferase (206 aa).

5-phospho-alpha-D-ribose 1-diphosphate is bound by residues Arg76, Arg101, and 128-136 (DPMLATGGS). Uracil is bound by residues Ile191 and 196 to 198 (GDA). Asp197 provides a ligand contact to 5-phospho-alpha-D-ribose 1-diphosphate.

The protein belongs to the UPRTase family. It depends on Mg(2+) as a cofactor.

The enzyme catalyses UMP + diphosphate = 5-phospho-alpha-D-ribose 1-diphosphate + uracil. It functions in the pathway pyrimidine metabolism; UMP biosynthesis via salvage pathway; UMP from uracil: step 1/1. Its activity is regulated as follows. Allosterically activated by GTP. Catalyzes the conversion of uracil and 5-phospho-alpha-D-ribose 1-diphosphate (PRPP) to UMP and diphosphate. This chain is Uracil phosphoribosyltransferase, found in Malacoplasma penetrans (strain HF-2) (Mycoplasma penetrans).